The chain runs to 326 residues: Tetraacyldisaccharide 4'-kinase (326 aa).

ATP is bound at residue 53–60; it reads SVGGNGKT.

The protein belongs to the LpxK family.

The catalysed reaction is a lipid A disaccharide + ATP = a lipid IVA + ADP + H(+). It participates in glycolipid biosynthesis; lipid IV(A) biosynthesis; lipid IV(A) from (3R)-3-hydroxytetradecanoyl-[acyl-carrier-protein] and UDP-N-acetyl-alpha-D-glucosamine: step 6/6. Its function is as follows. Transfers the gamma-phosphate of ATP to the 4'-position of a tetraacyldisaccharide 1-phosphate intermediate (termed DS-1-P) to form tetraacyldisaccharide 1,4'-bis-phosphate (lipid IVA). This is Tetraacyldisaccharide 4'-kinase from Actinobacillus pleuropneumoniae serotype 7 (strain AP76).